Reading from the N-terminus, the 88-residue chain is UPF0297 protein BcerKBAB4_4234 (88 aa).

It belongs to the UPF0297 family.

The sequence is that of UPF0297 protein BcerKBAB4_4234 from Bacillus mycoides (strain KBAB4) (Bacillus weihenstephanensis).